The chain runs to 623 residues: V-type proton ATPase catalytic subunit A (623 aa).

252-259 (GAFGCGKT) lines the ATP pocket.

It belongs to the ATPase alpha/beta chains family. V-ATPase is a heteromultimeric enzyme composed of a peripheral catalytic V1 complex (main components: subunits A, B, C, D, E, and F) attached to an integral membrane V0 proton pore complex (main component: the proteolipid protein).

The catalysed reaction is ATP + H2O + 4 H(+)(in) = ADP + phosphate + 5 H(+)(out). In terms of biological role, catalytic subunit of the peripheral V1 complex of vacuolar ATPase. V-ATPase vacuolar ATPase is responsible for acidifying a variety of intracellular compartments in eukaryotic cells. The chain is V-type proton ATPase catalytic subunit A from Citrus unshiu (Satsuma mandarin).